Reading from the N-terminus, the 310-residue chain is Methionyl-tRNA formyltransferase (310 aa).

111-114 is a (6S)-5,6,7,8-tetrahydrofolate binding site; the sequence is SLLP.

The protein belongs to the Fmt family.

The enzyme catalyses L-methionyl-tRNA(fMet) + (6R)-10-formyltetrahydrofolate = N-formyl-L-methionyl-tRNA(fMet) + (6S)-5,6,7,8-tetrahydrofolate + H(+). Attaches a formyl group to the free amino group of methionyl-tRNA(fMet). The formyl group appears to play a dual role in the initiator identity of N-formylmethionyl-tRNA by promoting its recognition by IF2 and preventing the misappropriation of this tRNA by the elongation apparatus. The polypeptide is Methionyl-tRNA formyltransferase (Rhodopseudomonas palustris (strain BisB5)).